Here is a 345-residue protein sequence, read N- to C-terminus: Nuclear hormone receptor family nhr-176 (345 aa).

Residues isoleucine 7–serine 82 constitute a DNA-binding region (nuclear receptor). Residues cysteine 10 to cysteine 30 form an NR C4-type zinc finger. The NR C4-type; degenerate zinc-finger motif lies at asparagine 46 to cysteine 65. An NR LBD domain is found at phenylalanine 92 to serine 342. The interval serine 331 to serine 342 is AF-2.

The protein resides in the nucleus. Functionally, nuclear hormone receptor. Binds to xenobiotic ligand thiabendazole (TBZ), in vitro. Involved in the up-regulation of phase I detoxification genes, such as probable cytochrome P450 cyp-35d1, in response to TBZ. The protein is Nuclear hormone receptor family nhr-176 of Caenorhabditis elegans.